The chain runs to 98 residues: NADH-ubiquinone oxidoreductase chain 4L (98 aa).

Transmembrane regions (helical) follow at residues 2–22, 29–49, and 61–81; these read TQASTNILLAFFFSLLGTLIF, TLLCLEGMMLTLFIMSTMTAL, and IVMLVFAACEAAIGLALLAMI.

This sequence belongs to the complex I subunit 4L family. Core subunit of respiratory chain NADH dehydrogenase (Complex I) which is composed of 45 different subunits.

The protein resides in the mitochondrion inner membrane. The catalysed reaction is a ubiquinone + NADH + 5 H(+)(in) = a ubiquinol + NAD(+) + 4 H(+)(out). Core subunit of the mitochondrial membrane respiratory chain NADH dehydrogenase (Complex I) which catalyzes electron transfer from NADH through the respiratory chain, using ubiquinone as an electron acceptor. Part of the enzyme membrane arm which is embedded in the lipid bilayer and involved in proton translocation. The chain is NADH-ubiquinone oxidoreductase chain 4L (MT-ND4L) from Calomys musculinus (Drylands vesper mouse).